The following is a 154-amino-acid chain: 8-oxo-dGTP diphosphatase (154 aa).

Residues 1 to 129 (MPQLATICYI…DHTFVEWLLE (129 aa)) form the Nudix hydrolase domain. 4 residues coordinate Mg(2+): Gly-38, Glu-53, Glu-56, and Glu-57. A Nudix box motif is present at residues 38-59 (GKLERGETPQECAAREILEETG).

This sequence belongs to the Nudix hydrolase family. In terms of assembly, homotrimer. It depends on Mg(2+) as a cofactor.

The catalysed reaction is 8-oxo-dGTP + H2O = 8-oxo-dGMP + diphosphate + H(+). Its function is as follows. Involved in the DNA repair system to avoid A.T to G.C transversions. Degrades 8-oxo-dGTP to the monophosphate, but is also active on all of the nucleoside triphosphates. This Streptococcus pneumoniae serotype 4 (strain ATCC BAA-334 / TIGR4) protein is 8-oxo-dGTP diphosphatase (mutX).